The sequence spans 184 residues: dTTP/UTP pyrophosphatase (184 aa).

D65 serves as the catalytic Proton acceptor.

Belongs to the Maf family. YhdE subfamily. Requires a divalent metal cation as cofactor.

It localises to the cytoplasm. It carries out the reaction dTTP + H2O = dTMP + diphosphate + H(+). The catalysed reaction is UTP + H2O = UMP + diphosphate + H(+). Functionally, nucleoside triphosphate pyrophosphatase that hydrolyzes dTTP and UTP. May have a dual role in cell division arrest and in preventing the incorporation of modified nucleotides into cellular nucleic acids. The polypeptide is dTTP/UTP pyrophosphatase (Thermococcus onnurineus (strain NA1)).